The following is a 316-amino-acid chain: Transaldolase (316 aa).

Lysine 132 serves as the catalytic Schiff-base intermediate with substrate.

The protein belongs to the transaldolase family. Type 1 subfamily. In terms of assembly, homodimer.

It localises to the cytoplasm. The enzyme catalyses D-sedoheptulose 7-phosphate + D-glyceraldehyde 3-phosphate = D-erythrose 4-phosphate + beta-D-fructose 6-phosphate. It participates in carbohydrate degradation; pentose phosphate pathway; D-glyceraldehyde 3-phosphate and beta-D-fructose 6-phosphate from D-ribose 5-phosphate and D-xylulose 5-phosphate (non-oxidative stage): step 2/3. In terms of biological role, transaldolase is important for the balance of metabolites in the pentose-phosphate pathway. In Aliivibrio salmonicida (strain LFI1238) (Vibrio salmonicida (strain LFI1238)), this protein is Transaldolase.